The primary structure comprises 458 residues: Probable M18 family aminopeptidase 1 (458 aa).

H95, H170, and H434 together coordinate Zn(2+).

It belongs to the peptidase M18 family. Requires Zn(2+) as cofactor.

In Borreliella afzelii (strain PKo) (Borrelia afzelii), this protein is Probable M18 family aminopeptidase 1.